Reading from the N-terminus, the 918-residue chain is Valine--tRNA ligase (918 aa).

Positions P50–H60 match the 'HIGH' region motif. Positions K548–S552 match the 'KMSKS' region motif. Position 551 (K551) interacts with ATP. Residues N849–N883 are a coiled coil.

Belongs to the class-I aminoacyl-tRNA synthetase family. ValS type 1 subfamily. Monomer.

It localises to the cytoplasm. The enzyme catalyses tRNA(Val) + L-valine + ATP = L-valyl-tRNA(Val) + AMP + diphosphate. Functionally, catalyzes the attachment of valine to tRNA(Val). As ValRS can inadvertently accommodate and process structurally similar amino acids such as threonine, to avoid such errors, it has a 'posttransfer' editing activity that hydrolyzes mischarged Thr-tRNA(Val) in a tRNA-dependent manner. The sequence is that of Valine--tRNA ligase from Prochlorococcus marinus subsp. pastoris (strain CCMP1986 / NIES-2087 / MED4).